The following is a 323-amino-acid chain: Protease Do-like 5, chloroplastic (323 aa).

The transit peptide at 1–28 (MTMALASSKAFSSIFNTLSPINQSKFVL) directs the protein to the chloroplast. A thylakoid-targeting transit peptide spans 29-73 (ACSGSNHVDVIDRRRRIMIFGSSLALTSSLLGSNQQRLPMESAIA). Active-site charge relay system residues include H147, D188, and S266. The tract at residues 186-283 (DNDLAVLKIE…YGHTIGVNTA (98 aa)) is serine protease.

The protein belongs to the peptidase S1C family.

The protein localises to the plastid. Its subcellular location is the chloroplast thylakoid lumen. Its function is as follows. Probable serine protease. The polypeptide is Protease Do-like 5, chloroplastic (DEGP5) (Arabidopsis thaliana (Mouse-ear cress)).